We begin with the raw amino-acid sequence, 419 residues long: Dynein regulatory complex protein 9 (419 aa).

2 disordered regions span residues 1-47 (MEGE…SPEV) and 393-419 (SFKM…RGKK). Positions 34-44 (EELEEEEEETS) are enriched in acidic residues. Residues 371-400 (ELRSIVKLQAWWRGTVVRREIGSFKMPKKE) form the IQ domain.

This sequence belongs to the DRC9 family. In terms of assembly, component of the nexin-dynein regulatory complex (N-DRC). Interacts (via IQ domain) with CALM when calcium levels are low. Does not interact with CALM in the presence of Ca(2+). Interacts with the HSP70 proteins HSPA1L and HSPA8. May form a complex with CAMK4 and HSP70.

It is found in the cytoplasm. Its subcellular location is the cell projection. The protein localises to the cilium. It localises to the flagellum. The protein resides in the cytoskeleton. It is found in the flagellum axoneme. Component of the nexin-dynein regulatory complex (N-DRC), a key regulator of ciliary/flagellar motility which maintains the alignment and integrity of the distal axoneme and regulates microtubule sliding in motile axonemes. Binds calmodulin when cellular Ca(2+) levels are low and thereby contributes to the regulation of calcium and calmodulin-dependent protein kinase IV (CAMK4) activity; contributes to the regulation of CAMK4 signaling cascades. Required for normal axoneme assembly in sperm flagella, normal sperm tail formation and for male fertility. This Rattus norvegicus (Rat) protein is Dynein regulatory complex protein 9 (Iqcg).